A 488-amino-acid chain; its full sequence is Glutamyl-tRNA(Gln) amidotransferase subunit A (488 aa).

Catalysis depends on charge relay system residues Lys-79 and Ser-159. Residue Ser-183 is the Acyl-ester intermediate of the active site.

Belongs to the amidase family. GatA subfamily. As to quaternary structure, heterotrimer of A, B and C subunits.

It carries out the reaction L-glutamyl-tRNA(Gln) + L-glutamine + ATP + H2O = L-glutaminyl-tRNA(Gln) + L-glutamate + ADP + phosphate + H(+). In terms of biological role, allows the formation of correctly charged Gln-tRNA(Gln) through the transamidation of misacylated Glu-tRNA(Gln) in organisms which lack glutaminyl-tRNA synthetase. The reaction takes place in the presence of glutamine and ATP through an activated gamma-phospho-Glu-tRNA(Gln). The chain is Glutamyl-tRNA(Gln) amidotransferase subunit A from Wolbachia pipientis subsp. Culex pipiens (strain wPip).